Consider the following 482-residue polypeptide: UDP-N-acetylmuramate--L-alanine ligase (482 aa).

Residue 123 to 129 (GTHGKTT) participates in ATP binding.

It belongs to the MurCDEF family.

Its subcellular location is the cytoplasm. The catalysed reaction is UDP-N-acetyl-alpha-D-muramate + L-alanine + ATP = UDP-N-acetyl-alpha-D-muramoyl-L-alanine + ADP + phosphate + H(+). Its pathway is cell wall biogenesis; peptidoglycan biosynthesis. Cell wall formation. The sequence is that of UDP-N-acetylmuramate--L-alanine ligase from Pseudomonas putida (strain W619).